The sequence spans 31 residues: Conotoxin Cltx-2 (31 aa).

2 positions are modified to 4-hydroxyproline: Pro-6 and Pro-31.

Contains 4 disulfide bonds. As to expression, expressed by the venom duct.

It localises to the secreted. The polypeptide is Conotoxin Cltx-2 (Californiconus californicus (California cone)).